We begin with the raw amino-acid sequence, 462 residues long: MTTTKLWGGRFTAKAAEWVDEFGASIHFDEQMAAEDIEGSIAHAKMLGKQQIISESESAEIVAGLVALKKELDDGMLAFDVKNEDIHMNIEVLLTQKIGAVAGKLHTARSRNDQVATDFHLWVKHRLPHVLDALTELQETLLQLATQHAGTIMSGYTHLQHAQPITYGHYLLAYCEMFQRDYDRFEFNQKHTDMLPLGAAALAGTTFPIDRDFVAEQLGFNDIYHNSLDAVSDRDFALEFLSNAAMLMMHLSRMAEELILWSTYEFNYIELSDDFSTGSSIMPQKKNADFAELVRGKTGRTYGALMALLTTMKALPLAYNKDMQEDKEQVFDVMDTVLAAIKIFTGMLSEITVHKERMLASTQDDFSNATELADYLATKGVPFREAHAIVGQLVLTGIQTHTPLQNMALADLQAAAPQIEADIYLVLQSETAVNRRTSIGGTAVANVQKEIARQYKNLEARQ.

The protein belongs to the lyase 1 family. Argininosuccinate lyase subfamily.

The protein resides in the cytoplasm. The catalysed reaction is 2-(N(omega)-L-arginino)succinate = fumarate + L-arginine. The protein operates within amino-acid biosynthesis; L-arginine biosynthesis; L-arginine from L-ornithine and carbamoyl phosphate: step 3/3. This is Argininosuccinate lyase from Leuconostoc citreum (strain KM20).